Here is a 1195-residue protein sequence, read N- to C-terminus: Phosphatidylinositol-3,5-bisphosphate 3-phosphatase MTMR4 (1195 aa).

The residue at position 8 (serine 8) is a Phosphoserine. A Myotubularin phosphatase domain is found at 153 to 570; it reads EHIRCRQEAE…RALHLWTAVY (418 aa). Positions 320, 345, and 346 each coordinate a 1,2-diacyl-sn-glycero-3-phospho-(1D-myo-inositol-3,5-bisphosphate). A 1,2-diacyl-sn-glycero-3-phospho-(1D-myo-inositol-3-phosphate) is bound by residues asparagine 320, asparagine 345, and isoleucine 346. The Phosphocysteine intermediate role is filled by cysteine 407. 8 residues coordinate a 1,2-diacyl-sn-glycero-3-phospho-(1D-myo-inositol-3,5-bisphosphate): serine 408, aspartate 409, glycine 410, tryptophan 411, aspartate 412, arginine 413, lysine 449, and arginine 453. A 1,2-diacyl-sn-glycero-3-phospho-(1D-myo-inositol-3-phosphate) contacts are provided by serine 408, aspartate 409, glycine 410, tryptophan 411, aspartate 412, and arginine 413. Position 453 (arginine 453) interacts with a 1,2-diacyl-sn-glycero-3-phospho-(1D-myo-inositol-3-phosphate). 2 positions are modified to phosphoserine: serine 610 and serine 629. Disordered regions lie at residues 645–756, 780–800, and 827–877; these read EPWH…EHCP, ESSQ…SMLG, and DPST…LLEN. Positions 720 to 729 are enriched in basic and acidic residues; it reads PEIKVLEETK. Polar residues-rich tracts occupy residues 780-795 and 831-854; these read ESSQ…QAQP and DFLN…SSVP. A PY-motif; substrate motif for NEDD4 motif is present at residues 1004–1008; the sequence is VPPLY. Positions 1023–1055 form a coiled coil; it reads HRLRQIEAGYKQEVEQLRRQVRELQMRLDIRHC. The FYVE-type zinc-finger motif lies at 1114-1174; that stretch reads DHMASHCYNC…VCNSCYEHIQ (61 aa). Zn(2+) contacts are provided by cysteine 1120, cysteine 1123, cysteine 1136, cysteine 1139, cysteine 1144, cysteine 1147, cysteine 1166, and cysteine 1169.

Belongs to the protein-tyrosine phosphatase family. Non-receptor class myotubularin subfamily. As to quaternary structure, homooligomeric. Forms MTMR3:MTMR4 heterooligomers; regulates the localization of both proteins. The MTMR3:MTMR4 heterooligomer can also recruit both CEP55 and PLK1; occurs during early mitosis, regulates the phosphorylation of CEP55 by PLK1 and its recruitment to the midbody where it can mediate cell abscission. Interacts with SMAD2 and SMAD3; negatively regulates TGF-beta signaling through SMAD2 and SMAD3 dephosphorylation and retention in endosomes. Interacts with SMAD1; negatively regulates BMP signaling through SMAD1 dephosphorylation and retention in endosomes. In terms of processing, ubiquitinated. Ubiquitination by NEDD4 probably leads to proteasomal degradation. Post-translationally, phosphorylated by CDK1 during mitosis. Expressed in brain, heart, kidney, spleen, liver, colon, testis, muscle, placenta, thyroid gland, pancreas, ovary, prostate, skin, peripheral blood, and bone marrow.

Its subcellular location is the early endosome membrane. It localises to the recycling endosome membrane. The protein resides in the late endosome membrane. The protein localises to the cytoplasmic vesicle. It is found in the phagosome membrane. It catalyses the reaction a 1,2-diacyl-sn-glycero-3-phospho-(1D-myo-inositol-3-phosphate) + H2O = a 1,2-diacyl-sn-glycero-3-phospho-(1D-myo-inositol) + phosphate. It carries out the reaction a 1,2-diacyl-sn-glycero-3-phospho-(1D-myo-inositol-3,5-bisphosphate) + H2O = a 1,2-diacyl-sn-glycero-3-phospho-(1D-myo-inositol-5-phosphate) + phosphate. The enzyme catalyses 1,2-dioctanoyl-sn-glycero-3-phospho-(1-D-myo-inositol-3-phosphate) + H2O = 1,2-dioctanoyl-sn-glycero-3-phospho-(1D-myo-inositol) + phosphate. The catalysed reaction is 1,2-dioctanoyl-sn-glycero-3-phospho-(1D-myo-inositol-3,5-bisphosphate) + H2O = 1,2-dioctanoyl-sn-glycero-3-phospho-(1D-myo-inositol-5-phosphate) + phosphate. With respect to regulation, the phosphatidylinositol-3-phosphate phosphatase activity is inhibited by vanadate. Its function is as follows. Lipid phosphatase that specifically dephosphorylates the D-3 position of phosphatidylinositol 3-phosphate and phosphatidylinositol 3,5-bisphosphate, generating phosphatidylinositol and phosphatidylinositol 5-phosphate. Decreases the levels of phosphatidylinositol 3-phosphate, a phospholipid found in cell membranes where it acts as key regulator of both cell signaling and intracellular membrane traffic, in a subset of endosomal membranes to negatively regulate both endocytic recycling and trafficking and/or maturation of endosomes toward lysosomes. Through phosphatidylinositol 3-phosphate turnover in phagosome membranes regulates phagocytosis and phagosome maturation. By decreasing phosphatidylinositol 3-monophosphate (PI3P) levels in immune cells it can also regulate the innate immune response. Beside its lipid phosphatase activity, can also function as a molecular adapter to regulate midbody abscission during mitotic cytokinesis. Can also negatively regulate TGF-beta and BMP signaling through Smad proteins dephosphorylation and retention in endosomes. This Homo sapiens (Human) protein is Phosphatidylinositol-3,5-bisphosphate 3-phosphatase MTMR4.